Consider the following 707-residue polypeptide: Elongation factor G (707 aa).

A tr-type G domain is found at glutamate 8–leucine 297. GTP is bound by residues alanine 17–threonine 24, aspartate 96–histidine 100, and asparagine 150–aspartate 153.

Belongs to the TRAFAC class translation factor GTPase superfamily. Classic translation factor GTPase family. EF-G/EF-2 subfamily.

Its subcellular location is the cytoplasm. Its function is as follows. Catalyzes the GTP-dependent ribosomal translocation step during translation elongation. During this step, the ribosome changes from the pre-translocational (PRE) to the post-translocational (POST) state as the newly formed A-site-bound peptidyl-tRNA and P-site-bound deacylated tRNA move to the P and E sites, respectively. Catalyzes the coordinated movement of the two tRNA molecules, the mRNA and conformational changes in the ribosome. This chain is Elongation factor G, found in Gloeobacter violaceus (strain ATCC 29082 / PCC 7421).